Reading from the N-terminus, the 373-residue chain is Ferroptosis suppressor protein 1 (373 aa).

Gly-2 carries N-myristoyl glycine lipidation. The helical transmembrane segment at Val-7–Ala-27 threads the bilayer. Residues Gly-18–Gly-22, Arg-54, and Val-82 contribute to the 6-hydroxy-FAD site. Lys-168 carries the post-translational modification N6-acetyllysine. Asp-285 is a 6-hydroxy-FAD binding site.

Belongs to the FAD-dependent oxidoreductase family. As to quaternary structure, interacts with importin subunits KPNA2 and IPO5; this interaction likely mediates the translocation into the nucleus upon oxidative stress. Requires 6-hydroxy-FAD as cofactor. N-myristoylation at Gly-2 mediates the recruitment to lipid droplets and plasma membrane. In terms of processing, acetylation at Lys-168 prevents AIFM2 ubiquitination and degradation, thereby inhibiting ferroptosis. KAT2B mediates acetylation at Lys-168, while HDAC3 removes it. Post-translationally, ubiquitinated. AIFM2 undergoes 'Lys-29'-ubiquitination and proteasomal degradation, which is inhibited by acetylation at Lys-168. In terms of tissue distribution, detected in most normal tissues as two transcripts of 1.8 and 4.0 kb in length, respectively. Highly expressed in liver, testis, and kidney, and expressed at lower levels in pancreas, spleen, brain and lung. Expressed in heart (at protein level).

It localises to the lipid droplet. Its subcellular location is the cell membrane. The protein resides in the cytoplasm. It is found in the mitochondrion membrane. The protein localises to the nucleus. The catalysed reaction is ubiquinone-10 + NADH + H(+) = ubiquinol-10 + NAD(+). It catalyses the reaction phylloquinone + NADH + H(+) = phylloquinol + NAD(+). The enzyme catalyses menaquinone-4 + NADH + H(+) = menaquinol-4 + NAD(+). It carries out the reaction menadione + NADH + H(+) = menadiol + NAD(+). With respect to regulation, the modification by 4-hydroxy-2-nonenal (HNE) adduction in mitochondria results in loss of the oxidoreductase activity and activation of a novel function in mitochondrial oxidative stress signaling. An NAD(P)H-dependent oxidoreductase that acts as a key inhibitor of ferroptosis. At the plasma membrane, catalyzes reduction of coenzyme Q/ubiquinone-10 to ubiquinol-10, a lipophilic radical-trapping antioxidant that prevents lipid oxidative damage and consequently ferroptosis. Acts in parallel to GPX4 to suppress phospholipid peroxidation and ferroptosis. This anti-ferroptotic function is independent of cellular glutathione levels. Also acts as a potent radical-trapping antioxidant by mediating warfarin-resistant vitamin K reduction in the canonical vitamin K cycle: catalyzes NAD(P)H-dependent reduction of vitamin K (phylloquinone, menaquinone-4 and menadione) to hydroquinone forms. Hydroquinones act as potent radical-trapping antioxidants inhibitor of phospholipid peroxidation and ferroptosis. May play a role in mitochondrial stress signaling. Upon oxidative stress, associates with the lipid peroxidation end product 4-hydroxy-2-nonenal (HNE) forming a lipid adduct devoid of oxidoreductase activity, which then translocates from mitochondria into the nucleus triggering DNA damage and cell death. This is Ferroptosis suppressor protein 1 from Mus musculus (Mouse).